A 306-amino-acid chain; its full sequence is Putative dihydroorotate dehydrogenase A (fumarate) (306 aa).

Residues S24 and K48 to S49 contribute to the FMN site. Residues K48, N72–L76, and N129 each bind substrate. Position 129 (N129) interacts with FMN. C132 acts as the Nucleophile in catalysis. FMN is bound by residues K167 and I192. Residue N193–S194 participates in substrate binding. FMN is bound by residues G218 and G244–G245.

The protein belongs to the dihydroorotate dehydrogenase family. Type 1 subfamily. Homodimer. The cofactor is FMN.

The protein resides in the cytoplasm. It catalyses the reaction (S)-dihydroorotate + fumarate = orotate + succinate. The protein operates within pyrimidine metabolism; UMP biosynthesis via de novo pathway. Catalyzes the conversion of dihydroorotate to orotate with fumarate as the electron acceptor. The chain is Putative dihydroorotate dehydrogenase A (fumarate) (pyrD) from Aeropyrum pernix (strain ATCC 700893 / DSM 11879 / JCM 9820 / NBRC 100138 / K1).